The sequence spans 89 residues: Small ribosomal subunit protein uS15 (89 aa).

This sequence belongs to the universal ribosomal protein uS15 family. As to quaternary structure, part of the 30S ribosomal subunit. Forms a bridge to the 50S subunit in the 70S ribosome, contacting the 23S rRNA.

Functionally, one of the primary rRNA binding proteins, it binds directly to 16S rRNA where it helps nucleate assembly of the platform of the 30S subunit by binding and bridging several RNA helices of the 16S rRNA. In terms of biological role, forms an intersubunit bridge (bridge B4) with the 23S rRNA of the 50S subunit in the ribosome. In Parabacteroides distasonis (strain ATCC 8503 / DSM 20701 / CIP 104284 / JCM 5825 / NCTC 11152), this protein is Small ribosomal subunit protein uS15.